A 263-amino-acid polypeptide reads, in one-letter code: Acyl-[acyl-carrier-protein]--UDP-N-acetylglucosamine O-acyltransferase (263 aa).

Belongs to the transferase hexapeptide repeat family. LpxA subfamily. Homotrimer.

It localises to the cytoplasm. It catalyses the reaction a (3R)-hydroxyacyl-[ACP] + UDP-N-acetyl-alpha-D-glucosamine = a UDP-3-O-[(3R)-3-hydroxyacyl]-N-acetyl-alpha-D-glucosamine + holo-[ACP]. It participates in glycolipid biosynthesis; lipid IV(A) biosynthesis; lipid IV(A) from (3R)-3-hydroxytetradecanoyl-[acyl-carrier-protein] and UDP-N-acetyl-alpha-D-glucosamine: step 1/6. In terms of biological role, involved in the biosynthesis of lipid A, a phosphorylated glycolipid that anchors the lipopolysaccharide to the outer membrane of the cell. This Xanthomonas axonopodis pv. citri (strain 306) protein is Acyl-[acyl-carrier-protein]--UDP-N-acetylglucosamine O-acyltransferase.